A 795-amino-acid polypeptide reads, in one-letter code: Mitochondrial inner membrane m-AAA protease component paraplegin (795 aa).

The N-terminal 43 residues, 1-43 (MAVLLLLLRALRRGPGPGPRPLWGPGPAWSPGFPARPGRGRPY), are a transit peptide targeting the mitochondrion. Positions 44–105 (MASRPPGDLA…GGTFYFNTSR (62 aa)) are cleaved as a propeptide — removed in mature form. Residues 106 to 144 (LKQKNKEKDKSKGKAPEEDEEERRRRERDDQMYRERLRT) lie on the Mitochondrial matrix side of the membrane. Residues 108-133 (QKNKEKDKSKGKAPEEDEEERRRRER) are disordered. Positions 109–133 (KNKEKDKSKGKAPEEDEEERRRRER) are enriched in basic and acidic residues. A helical membrane pass occupies residues 145–165 (LLVIAVVMSLLNALSTSGGSI). At 166-248 (SWNDFVHEML…DRIPVSYKRT (83 aa)) the chain is on the mitochondrial intermembrane side. The chain crosses the membrane as a helical span at residues 249–269 (GFFGNALYSVGMTAVGLAILW). Residues 270–795 (YVFRLAGMTG…LGGEEPTWPK (526 aa)) lie on the Mitochondrial matrix side of the membrane. ATP contacts are provided by A312, G352, C353, G354, K355, T356, and L357. Residue Y505 is modified to 3'-nitrotyrosine. H574 is a binding site for Zn(2+). The active site involves E575. Zn(2+) is bound by residues H578 and D650. The interval 701-795 (HEARLLVAKA…LGGEEPTWPK (95 aa)) is interaction with PPIF. Residues 751 to 795 (PHGPKKMIAPQRWIDAQREKQDLGEEETEETQQPPLGGEEPTWPK) are disordered.

In the N-terminal section; belongs to the AAA ATPase family. This sequence in the C-terminal section; belongs to the peptidase M41 family. In terms of assembly, forms heterooligomers with AFG3L2; the m-AAA protease is composed of heterohexamers of AFG3L2 and SPG7. Component of the mitochondrial permeability transition pore complex (mPTPC), at least composed of SPG7, VDAC1 and PPIF. Interacts with MAIP1. The cofactor is Zn(2+). Post-translationally, upon import into the mitochondrion, the N-terminal transit peptide is cleaved by the mitochondrial-processing peptidase (MPP) to generate an intermediate form which undergoes a second proteolytic cleavage mediated by proteases AFG3L2 removing an additional N-terminal fragment to generate the proteolytically active mature form. As to expression, ubiquitous.

It localises to the mitochondrion inner membrane. It carries out the reaction ATP + H2O = ADP + phosphate + H(+). Functionally, catalytic component of the m-AAA protease, a protease that plays a key role in proteostasis of inner mitochondrial membrane proteins, and which is essential for axonal and neuron development. SPG7 possesses both ATPase and protease activities: the ATPase activity is required to unfold substrates, threading them into the internal proteolytic cavity for hydrolysis into small peptide fragments. The m-AAA protease exerts a dual role in the mitochondrial inner membrane: it mediates the processing of specific regulatory proteins and ensures protein quality control by degrading misfolded polypeptides. Mediates protein maturation of the mitochondrial ribosomal subunit MRPL32/bL32m by catalyzing the cleavage of the presequence of MRPL32/bL32m prior to assembly into the mitochondrial ribosome. Acts as a regulator of calcium in neurons by mediating degradation of SMDT1/EMRE before its assembly with the uniporter complex, limiting the availability of SMDT1/EMRE for MCU assembly and promoting efficient assembly of gatekeeper subunits with MCU. Also regulates mitochondrial calcium by catalyzing degradation of MCU. Plays a role in the formation and regulation of the mitochondrial permeability transition pore (mPTP) and its proteolytic activity is dispensable for this function. The chain is Mitochondrial inner membrane m-AAA protease component paraplegin from Homo sapiens (Human).